Consider the following 213-residue polypeptide: Sclerostin (213 aa).

The N-terminal stretch at 1–23 is a signal peptide; the sequence is MQLPLALCLVCLLVHAAFRVVEG. The disordered stretch occupies residues 41 to 71; sequence GEYPEPPPELENNKTMNRAENGGRPPHHPFE. Asn53 is a glycosylation site (N-linked (GlcNAc...) asparagine). Cystine bridges form between Cys80-Cys134, Cys94-Cys148, Cys105-Cys165, and Cys109-Cys167. The region spanning 82–172 is the CTCK domain; sequence ELHFTRYVTD…ASCKCKRLTR (91 aa). N-linked (GlcNAc...) asparagine glycosylation occurs at Asn175. A disordered region spans residues 178-213; it reads ELKDFGPEAARPQKGRKPRPRARGAKANQAELENAY. The segment covering 190-201 has biased composition (basic residues); it reads QKGRKPRPRARG.

It belongs to the sclerostin family. As to quaternary structure, interacts with LRP4 (via the extracellular domain); the interaction facilitates the inhibition of Wnt signaling. Interacts with LRP5 (via the first two YWTD-EGF repeat domains); the interaction inhibits Wnt-mediated signaling. Interacts with LRP6.

Its subcellular location is the secreted. The protein resides in the extracellular space. The protein localises to the extracellular matrix. Negative regulator of bone growth that acts through inhibition of Wnt signaling and bone formation. This Chlorocebus aethiops (Green monkey) protein is Sclerostin.